The sequence spans 208 residues: MSLSTLLSLVDELQEPRSPIYELGLGLHPHSRYVLPLGTQQRRSINGCPCASPICPSSPAGQVLALRREMANRNDIHWPATAHVGKDGFQVCMDVAQFKPSELNVKVVDDSILVEGKHEERQDDHGHIMRHFVRRYKVPDGYKAEQVVSQLSSDGVLTVSIPKPQAVEDKSKERIIQIQQVGPAHLNVKANESEVKGKENGAPNGKDK.

3 positions are modified to phosphoserine: serine 44, serine 52, and serine 58. Positions 71–179 (ANRNDIHWPA…KSKERIIQIQ (109 aa)) constitute a sHSP domain. A disordered region spans residues 187 to 208 (NVKANESEVKGKENGAPNGKDK). A compositionally biased stretch (basic and acidic residues) spans 191–208 (NESEVKGKENGAPNGKDK).

The protein belongs to the small heat shock protein (HSP20) family.

In Drosophila melanogaster (Fruit fly), this protein is Heat shock protein 26 (Hsp26).